The sequence spans 711 residues: L-type lectin-domain containing receptor kinase VIII.2 (711 aa).

An N-terminal signal peptide occupies residues 1–30; the sequence is MLKLPPRFFSVYSTLIHILASFLCSSDVRG. Over 31–315 the chain is Extracellular; the sequence is DFPATRFDLG…NKLCKKSPAA (285 aa). Residues 35–260 form a legume-lectin like region; it reads TRFDLGTLTL…IHSVDWWSFS (226 aa). N-linked (GlcNAc...) asparagine glycosylation is present at asparagine 57. A disordered region spans residues 265-306; the sequence is ESSESPPPMPNSPPPSSPSSSITPSLSTVRRKTADPSSSCRN. Residues 269 to 281 are compositionally biased toward pro residues; the sequence is SPPPMPNSPPPSS. Residues 282 to 291 are compositionally biased toward low complexity; it reads PSSSITPSLS. The helical transmembrane segment at 316-336 threads the bilayer; that stretch reads VAGVVTAGAFFLALFAGVIIW. Over 337 to 711 the chain is Cytoplasmic; sequence VYSKKIKYTR…IFIVGKDRSV (375 aa). The Protein kinase domain maps to 374-656; sequence FSSSRVIGNG…LVGEADVPEV (283 aa). ATP contacts are provided by residues 380–388 and lysine 403; that span reads IGNGAFGTV. Catalysis depends on aspartate 497, which acts as the Proton acceptor.

It in the C-terminal section; belongs to the protein kinase superfamily. Ser/Thr protein kinase family. The protein in the N-terminal section; belongs to the leguminous lectin family.

Its subcellular location is the cell membrane. The enzyme catalyses L-seryl-[protein] + ATP = O-phospho-L-seryl-[protein] + ADP + H(+). It catalyses the reaction L-threonyl-[protein] + ATP = O-phospho-L-threonyl-[protein] + ADP + H(+). Its function is as follows. Involved in resistance response to the pathogenic oomycetes Phytophthora infestans and Phytophthora capsici. The polypeptide is L-type lectin-domain containing receptor kinase VIII.2 (Arabidopsis thaliana (Mouse-ear cress)).